A 474-amino-acid polypeptide reads, in one-letter code: Glutamate--tRNA ligase (474 aa).

The 'HIGH' region signature appears at 9-19; that stretch reads PSPTGYLHVGG. A 'KMSKS' region motif is present at residues 240–244; the sequence is KLSKR. Lys-243 contributes to the ATP binding site.

It belongs to the class-I aminoacyl-tRNA synthetase family. Glutamate--tRNA ligase type 1 subfamily. As to quaternary structure, monomer.

The protein localises to the cytoplasm. It catalyses the reaction tRNA(Glu) + L-glutamate + ATP = L-glutamyl-tRNA(Glu) + AMP + diphosphate. Catalyzes the attachment of glutamate to tRNA(Glu) in a two-step reaction: glutamate is first activated by ATP to form Glu-AMP and then transferred to the acceptor end of tRNA(Glu). In Aliivibrio salmonicida (strain LFI1238) (Vibrio salmonicida (strain LFI1238)), this protein is Glutamate--tRNA ligase.